The chain runs to 55 residues: UPF0391 membrane protein RSp1666 (55 aa).

2 helical membrane passes run alanine 5–alanine 25 and isoleucine 33–glycine 53.

Belongs to the UPF0391 family.

It localises to the cell membrane. The sequence is that of UPF0391 membrane protein RSp1666 from Ralstonia nicotianae (strain ATCC BAA-1114 / GMI1000) (Ralstonia solanacearum).